A 267-amino-acid polypeptide reads, in one-letter code: Ribosomal RNA small subunit methyltransferase A (267 aa).

Residues Asn-18, Leu-20, Gly-45, Glu-66, Asp-91, and Asn-112 each coordinate S-adenosyl-L-methionine.

The protein belongs to the class I-like SAM-binding methyltransferase superfamily. rRNA adenine N(6)-methyltransferase family. RsmA subfamily.

The protein localises to the cytoplasm. It catalyses the reaction adenosine(1518)/adenosine(1519) in 16S rRNA + 4 S-adenosyl-L-methionine = N(6)-dimethyladenosine(1518)/N(6)-dimethyladenosine(1519) in 16S rRNA + 4 S-adenosyl-L-homocysteine + 4 H(+). Its function is as follows. Specifically dimethylates two adjacent adenosines (A1518 and A1519) in the loop of a conserved hairpin near the 3'-end of 16S rRNA in the 30S particle. May play a critical role in biogenesis of 30S subunits. The chain is Ribosomal RNA small subunit methyltransferase A from Shewanella woodyi (strain ATCC 51908 / MS32).